Reading from the N-terminus, the 1886-residue chain is MPSTDSSTKGTQDVAIVGLSCRFSGSATSANKFWDMLCNGESGHSETPRFNPKGFSDPGFRKQNQSATAYGHFLQQDVGAFDSRFFGITPEEALAMDPQQRMMLEVAYEAFENAGMTIEQLAGSRTSCFIGSFTSDYREMLFRDADAAPRYTVTGTGVSMLANRVSWFFDLRGPSVALNTACSSSLVALHLARRSLQSGEADIAIVGGTNLMLGSEMFTFFSNLNFLSRDGLSRSFDASGEGYGRGEGVAAVILKRVDDAIQDNDNIRAVVRGTSTNQDGKTKAITLPSLDAQIDLIRSAYKEGGLSFNDTTYFEAHGTGTRRGDPVELEAISKTLCVDRPTNSKIIVGSVKSNVGHTEATAGLAGIIKAIYMLEKGIIPATINYSRPLPEFDLNSSLLTIPVETKPWPGTSVRRISINSFGFGGANAHAVLDDAPSYLASKSLGNGTKDANSNAPVLRTNGSLVNGNGANEDVQTSTEQLSFLFSGQDQQSLDRNFETMVQHIQTKSFSDSRSELQYLVDLAYTLSERRSRFKVRAEVVASSVTQLVSKIQERSFARVNNDLANTKKSIPAEERTCELKRRVLVDLPAYSWDHSSTYWAESRVSKEFRLRKHPQRSLIGAPQPSYGENEHIWRGYLRLSEEPWVKDHQVLGAIVYPAAGYIAMAIEAAQDIADKGRKVSRYNLRDVQFQAAAVIKEDVPLELIIQMRPHRSATRSTATSWLEFSISSCHNEKNLRDNCFGLLSIEYESSQDSSMALEQEREDALVLDKHRRTAEVCHTTQSPKALYQELASVGLNYGEAFQQISEISKTDGLSSCRVLSYVPDRFSTPNVIHPATLDCMIQTIFPALSGNHTPIHAAMVPTLLEEMSVASRTPNAAASFFRGSASARYSGAREMLAEFAMVDQDNKLSVTARGLHCTAISEATNPRTEQDEDGRRNICSQLMWVPATGVDSVEQVQNKATAPTQTFPPHDQDILILEGDHAYATALSDALMSLDQGKGSYIPIPKSFLRASLQDLEGKTCIATLEMGTSFLANAATDGFDTLKEIVRRCSRIIWVSSSTEPIGSVITGLARTMRNENAGLVFRTLQVPSQDMYDSENLAEVVSQLAASPTMDSEFRLEGGVLRVSRVLRDTKTDNMVASMARNGGPEIRLSTLSQVGTAQKLALPRLGMLDEIYFEADETANGLLRDEEVEIEVKASGVNFRDVLVVMGNVSDDLIGHEASGIISRVGSKVTSFRVGDRVCAIGHGCHRSVYRSTADLVHKIPDGMSFEEAATVPLVYTTAYTAIIDLARAQKGQSILIHAAAGGVGLAAIQIAIHLGLEIFATVSSEPKRQLLHDHGVMEDHIFNSRDISFAKGIMRTTTGRGVDIVLNSLAGEQLRQSWHCLAPFGNFVEIGIKDIITNSSLDMSPFAKDATFTAFEVINIMHKDPKRMANILRNVFQLLGNRSVKPVKPLLSKPISEVGEALRLLQAGKHMGKVALTWDRGQTIPMATTVVKPVLSDTATYVLVGGFGGLGQSIARMFADRGARHLCILSRSGARSREAVETINKLENQGVQVQSLACDVSDEGSLRTAFETCKIEMPPIRGVIQGAMVLRDISFEKMSHNQWHEALKPKVDGTWNLHKLMLRDLDFFIILSSFMGIFGSRTQGNYAAAGAYQDALAHHRRSQGLKAVSLDLGLMRDVSAFSKKEALSGPFKDWQEPFGLREVDVHGLLDHVIASEMTAPSTIPAQILTGFGTAREAEEAGIEPPYYLEDPRFSLLHTTIVEAQQDTATQQQPAATPPDLVAKHTTGDLLRQATSTEDVTDLVLEILIVKVAKHLEQNVANIDPEEPLYTYGVDSLVAIEFRNWIMKEFAADIALLDITAEEPMFDLVDKIVAKSKFLSVPS.

The Ketosynthase family 3 (KS3) domain maps to 11-434 (TQDVAIVGLS…GANAHAVLDD (424 aa)). Catalysis depends on for beta-ketoacyl synthase activity residues cysteine 182, histidine 317, and histidine 357. The tract at residues 483–568 (FLFSGQDQQS…VNNDLANTKK (86 aa)) is malonyl-CoA:ACP transacylase (MAT) domain. The segment at 616–750 (RSLIGAPQPS…GLLSIEYESS (135 aa)) is N-terminal hotdog fold. Positions 616 to 926 (RSLIGAPQPS…CTAISEATNP (311 aa)) constitute a PKS/mFAS DH domain. The tract at residues 618–924 (LIGAPQPSYG…LHCTAISEAT (307 aa)) is dehydratase (DH) domain. Catalysis depends on histidine 648, which acts as the Proton acceptor; for dehydratase activity. Positions 778–926 (HTTQSPKALY…CTAISEATNP (149 aa)) are C-terminal hotdog fold. Aspartate 838 (proton donor; for dehydratase activity) is an active-site residue. Residues 1169–1480 (GMLDEIYFEA…AGKHMGKVAL (312 aa)) are enoylreductase (ER) domain. The tract at residues 1503 to 1681 (ATYVLVGGFG…VSLDLGLMRD (179 aa)) is catalytic ketoreductase (KRc) domain. One can recognise a Carrier domain in the interval 1802–1879 (DVTDLVLEIL…DLVDKIVAKS (78 aa)). Serine 1839 is modified (O-(pantetheine 4'-phosphoryl)serine).

It functions in the pathway mycotoxin biosynthesis. Its function is as follows. Highly reducing polyketide synthase; part of the gene cluster that mediates the biosynthesis of the selective antifungal agent ascochitine, an o-quinone methide that plays a possible protective role against other microbial competitors in nature and is considered to be important for pathogenicity of legume-associated Didymella species. The pathway probably begins with the synthesis of a keto-aldehyde intermediate by the ascochitine non-reducing polyketide synthase pksAC from successive condensations of 4 malonyl-CoA units, presumably with a simple acetyl-CoA starter unit. Release of the keto-aldehyde intermediate is consistent with the presence of the C-terminal reductive release domain. The HR-PKS (orf7) probably makes a diketide starter unit which is passed to the non-reducing polyketide synthase pksAC for further extension, producing ascochital and ascochitine. The aldehyde dehydrogenase (orf1), the 2-oxoglutarate-dependent dioxygenase (orf3) and the dehydrogenase (orf9) are probably involved in subsequent oxidations of methyl groups to the carboxylic acid of the heterocyclic ring. The ascochitine gene cluster also includes a gene encoding a short peptide with a cupin domain (orf2) that is often found in secondary metabolite gene clusters and which function has still to be determined. This chain is Highly reducing polyketide synthase, found in Didymella fabae (Leaf and pod spot disease fungus).